A 156-amino-acid chain; its full sequence is ATP synthase subunit b (156 aa).

Residues 7 to 29 form a helical membrane-spanning segment; it reads LIGQMGTFLVFWWFVNKVIWPMF.

This sequence belongs to the ATPase B chain family. As to quaternary structure, F-type ATPases have 2 components, F(1) - the catalytic core - and F(0) - the membrane proton channel. F(1) has five subunits: alpha(3), beta(3), gamma(1), delta(1), epsilon(1). F(0) has three main subunits: a(1), b(2) and c(10-14). The alpha and beta chains form an alternating ring which encloses part of the gamma chain. F(1) is attached to F(0) by a central stalk formed by the gamma and epsilon chains, while a peripheral stalk is formed by the delta and b chains.

Its subcellular location is the cell inner membrane. Functionally, f(1)F(0) ATP synthase produces ATP from ADP in the presence of a proton or sodium gradient. F-type ATPases consist of two structural domains, F(1) containing the extramembraneous catalytic core and F(0) containing the membrane proton channel, linked together by a central stalk and a peripheral stalk. During catalysis, ATP synthesis in the catalytic domain of F(1) is coupled via a rotary mechanism of the central stalk subunits to proton translocation. Its function is as follows. Component of the F(0) channel, it forms part of the peripheral stalk, linking F(1) to F(0). The polypeptide is ATP synthase subunit b (Dichelobacter nodosus (strain VCS1703A)).